The primary structure comprises 344 residues: Dihydroorotase (344 aa).

The Zn(2+) site is built by histidine 13 and histidine 15. Substrate is bound by residues 15-17 (HLR) and asparagine 41. Residues lysine 98, histidine 135, and histidine 173 each coordinate Zn(2+). Position 98 is an N6-carboxylysine (lysine 98). Histidine 135 is a binding site for substrate. Leucine 218 lines the substrate pocket. Aspartate 247 contacts Zn(2+). The active site involves aspartate 247. 2 residues coordinate substrate: histidine 251 and alanine 263.

Belongs to the metallo-dependent hydrolases superfamily. DHOase family. Class II DHOase subfamily. In terms of assembly, homodimer. Requires Zn(2+) as cofactor.

It catalyses the reaction (S)-dihydroorotate + H2O = N-carbamoyl-L-aspartate + H(+). The protein operates within pyrimidine metabolism; UMP biosynthesis via de novo pathway; (S)-dihydroorotate from bicarbonate: step 3/3. Functionally, catalyzes the reversible cyclization of carbamoyl aspartate to dihydroorotate. The polypeptide is Dihydroorotase (Neisseria meningitidis serogroup C (strain 053442)).